We begin with the raw amino-acid sequence, 967 residues long: Importin-alpha re-exporter (967 aa).

Positions 20-95 constitute an Importin N-terminal domain; the sequence is AEEALKVWEL…KREIINLMLK (76 aa).

This sequence belongs to the XPO2/CSE1 family. In terms of assembly, binds with high affinity to importin-alpha only in the presence of RanGTP.

It localises to the cytoplasm. Its subcellular location is the nucleus envelope. Export receptor for importin alpha. Mediates importin-alpha re-export from the nucleus to the cytoplasm after import substrates have been released into the nucleoplasm. The sequence is that of Importin-alpha re-exporter (kap109) from Schizosaccharomyces pombe (strain 972 / ATCC 24843) (Fission yeast).